Reading from the N-terminus, the 543-residue chain is UPF0324 membrane protein RB9488 (543 aa).

Residues 1–22 show a composition bias toward low complexity; sequence MNSNTPSSDNSSPDNVSPDTSD. Residues 1 to 41 form a disordered region; that stretch reads MNSNTPSSDNSSPDNVSPDTSDMASAGDDSALATPPPRPSL. The chain crosses the membrane as a helical span at residues 51–73; the sequence is WWAIWCAALLLLIAFAAVWIGQP. Positions 91–120 are disordered; sequence VETAPENAGPSAEAENEAIETENTAPAENA. Transmembrane regions (helical) follow at residues 160–182, 189–211, 221–243, 270–292, 307–329, 336–358, 368–390, 403–422, 437–459, 479–496, and 511–533; these read ISSSWSGILGVFLIIAALFAFAN, AGAFLAAFPVIFLLATLAYWMSG, EYALWALLVGLIISNTVGTPDFL, LALGLPGVFVAWLVTPVVLITTY, NMVISADMSVCGVSAAIATAAAC, LSLSIGLSLGFTVIMMAVMPAVI, GGAWLGGTIDSTGAVAAAGAVLG, IQNILIGVTAFCVAIYWVTF, IWYRFPKFVLGFVSMSILFSILY, TLRGWFFCLAFVSIGLET, and LVLYVCGQSLNLVLTLVMAYLMF.

Belongs to the UPF0324 family.

It localises to the cell membrane. This is UPF0324 membrane protein RB9488 from Rhodopirellula baltica (strain DSM 10527 / NCIMB 13988 / SH1).